Consider the following 526-residue polypeptide: Probable carboxypeptidase 2 (526 aa).

The N-terminal stretch at 1–21 is a signal peptide; that stretch reads MVAYRLLALISLGLGSHCASA. N-linked (GlcNAc...) asparagine glycosylation occurs at N46. Residues 53–76 are disordered; sequence PAFTSPGTVPRGFSDGTSGPTRDE. The 281-residue stretch at 71-351 folds into the Peptidase M14 domain; that stretch reads GPTRDETMEG…VMAKSILQTA (281 aa). An N-linked (GlcNAc...) asparagine glycan is attached at N116. 3 residues coordinate Zn(2+): H136, E139, and H224. E322 (proton donor/acceptor) is an active-site residue. Residues N393 and N459 are each glycosylated (N-linked (GlcNAc...) asparagine).

Belongs to the peptidase M14 family. It depends on Zn(2+) as a cofactor.

The protein resides in the secreted. Extracellular metalloprotease that contributes to pathogenicity. This chain is Probable carboxypeptidase 2 (MCPB), found in Arthroderma benhamiae (strain ATCC MYA-4681 / CBS 112371) (Trichophyton mentagrophytes).